The primary structure comprises 212 residues: Ion-translocating oxidoreductase complex subunit G (212 aa).

A helical transmembrane segment spans residues 9–29 (GLLLALFALLCTGLVAVVNQQ). At Thr176 the chain carries FMN phosphoryl threonine.

The protein belongs to the RnfG family. As to quaternary structure, the complex is composed of six subunits: RnfA, RnfB, RnfC, RnfD, RnfE and RnfG. FMN is required as a cofactor.

Its subcellular location is the cell inner membrane. Its function is as follows. Part of a membrane-bound complex that couples electron transfer with translocation of ions across the membrane. The polypeptide is Ion-translocating oxidoreductase complex subunit G (Shewanella oneidensis (strain ATCC 700550 / JCM 31522 / CIP 106686 / LMG 19005 / NCIMB 14063 / MR-1)).